A 338-amino-acid chain; its full sequence is Nicotinate-nucleotide--dimethylbenzimidazole phosphoribosyltransferase (338 aa).

Glu305 acts as the Proton acceptor in catalysis.

The protein belongs to the CobT family.

It carries out the reaction 5,6-dimethylbenzimidazole + nicotinate beta-D-ribonucleotide = alpha-ribazole 5'-phosphate + nicotinate + H(+). It functions in the pathway nucleoside biosynthesis; alpha-ribazole biosynthesis; alpha-ribazole from 5,6-dimethylbenzimidazole: step 1/2. Its function is as follows. Catalyzes the synthesis of alpha-ribazole-5'-phosphate from nicotinate mononucleotide (NAMN) and 5,6-dimethylbenzimidazole (DMB). The chain is Nicotinate-nucleotide--dimethylbenzimidazole phosphoribosyltransferase from Rhizobium meliloti (strain 1021) (Ensifer meliloti).